Consider the following 408-residue polypeptide: UPF0761 membrane protein Avin_36810 (408 aa).

Helical transmembrane passes span 33 to 53 (YTAL…LSVV), 92 to 112 (HLTW…LMTV), 132 to 152 (FLLH…GFAL), 174 to 194 (LLKV…YVAV), 209 to 229 (LFAA…VALF), and 238 to 258 (AFAA…IVLL).

This sequence belongs to the UPF0761 family.

It is found in the cell inner membrane. The polypeptide is UPF0761 membrane protein Avin_36810 (Azotobacter vinelandii (strain DJ / ATCC BAA-1303)).